The primary structure comprises 306 residues: Pyridoxal 5'-phosphate synthase subunit PdxS (306 aa).

Residue aspartate 36 coordinates D-ribose 5-phosphate. The active-site Schiff-base intermediate with D-ribose 5-phosphate is lysine 93. Glycine 165 contributes to the D-ribose 5-phosphate binding site. Arginine 177 provides a ligand contact to D-glyceraldehyde 3-phosphate. D-ribose 5-phosphate-binding positions include glycine 226 and 247–248; that span reads GS.

Belongs to the PdxS/SNZ family. In the presence of PdxT, forms a dodecamer of heterodimers.

It carries out the reaction aldehydo-D-ribose 5-phosphate + D-glyceraldehyde 3-phosphate + L-glutamine = pyridoxal 5'-phosphate + L-glutamate + phosphate + 3 H2O + H(+). The protein operates within cofactor biosynthesis; pyridoxal 5'-phosphate biosynthesis. Its function is as follows. Catalyzes the formation of pyridoxal 5'-phosphate from ribose 5-phosphate (RBP), glyceraldehyde 3-phosphate (G3P) and ammonia. The ammonia is provided by the PdxT subunit. Can also use ribulose 5-phosphate and dihydroxyacetone phosphate as substrates, resulting from enzyme-catalyzed isomerization of RBP and G3P, respectively. In Corynebacterium urealyticum (strain ATCC 43042 / DSM 7109), this protein is Pyridoxal 5'-phosphate synthase subunit PdxS.